Consider the following 425-residue polypeptide: Polyadenylate-binding protein RBP47B' (425 aa).

3 RRM domains span residues 24–102 (RTLW…LNWA), 116–195 (HSIF…AATP), and 237–309 (TTIS…WSKN).

It belongs to the polyadenylate-binding RBP47 family. In terms of assembly, interacts with the poly(A) tail of mRNA in nucleus.

It localises to the nucleus. The protein resides in the cytoplasmic granule. Functionally, heterogeneous nuclear ribonucleoprotein (hnRNP)-protein binding the poly(A) tail of mRNA and probably involved in some steps of pre-mRNA maturation. This is Polyadenylate-binding protein RBP47B' (RBP47B') from Arabidopsis thaliana (Mouse-ear cress).